The primary structure comprises 528 residues: Gamma-taxilin (528 aa).

A compositionally biased stretch (basic and acidic residues) spans 1–10 (MATRVEEAAR). The interval 1–36 (MATRVEEAARGRGGGAEEATEAGRGGRRRSPRQKFE) is disordered. Omega-N-methylarginine is present on residues arginine 12 and arginine 24. Residues serine 79, serine 86, serine 97, and serine 105 each carry the phosphoserine modification. The interval 102–130 (TQESREEIPGGEARTDPPDGQQDSECNRN) is disordered. Basic and acidic residues predominate over residues 104-118 (ESREEIPGGEARTDP). A coiled-coil region spans residues 153–464 (EEKLAALCKK…LKEQVSIKAA (312 aa)). Tyrosine 283 is modified (phosphotyrosine). The disordered stretch occupies residues 486–528 (HKELNTSSKRALGAHLEAEPKSQRSAVQKPPSTGSAPAIESVD). Residues 508-520 (QRSAVQKPPSTGS) show a composition bias toward polar residues. Serine 517 is modified (phosphoserine).

Belongs to the taxilin family. As to quaternary structure, binds to the C-terminal coiled coil region of syntaxin family members STX1A, STX3A and STX4A. Forms a heterodimer with ATF4 in osteoblasts. Ubiquitously expressed. Expressed at high level in heart and skeletal muscle. Expressed in brain, placenta, lung, liver, kidney and pancreas.

It localises to the nucleus membrane. The protein resides in the cytoplasm. Its subcellular location is the cytosol. In terms of biological role, may be involved in intracellular vesicle traffic. Inhibits ATF4-mediated transcription, possibly by dimerizing with ATF4 to form inactive dimers that cannot bind DNA. May be involved in regulating bone mass density through an ATF4-dependent pathway. May be involved in cell cycle progression. This Homo sapiens (Human) protein is Gamma-taxilin (TXLNG).